A 1530-amino-acid chain; its full sequence is DNA-directed RNA polymerase III subunit RPC1 (1530 aa).

7 residues coordinate Zn(2+): Cys74, Cys77, Cys84, His87, Cys114, Cys117, and Cys161. Mg(2+)-binding residues include Asp503, Asp505, and Asp507. The tract at residues 846–858 (PTEFFFHTMAGRE) is bridging helix. Basic and acidic residues predominate over residues 992-1001 (EEQESREDAL). Disordered regions lie at residues 992 to 1016 (EEQE…SRPR) and 1057 to 1099 (NLLN…SKEG).

It belongs to the RNA polymerase beta' chain family. Component of the RNA polymerase III (Pol III) complex consisting of 17 subunits.

The protein resides in the nucleus. The enzyme catalyses RNA(n) + a ribonucleoside 5'-triphosphate = RNA(n+1) + diphosphate. In terms of biological role, DNA-dependent RNA polymerase catalyzes the transcription of DNA into RNA using the four ribonucleoside triphosphates as substrates. Largest and catalytic core component of RNA polymerase III which synthesizes small RNAs, such as 5S rRNA and tRNAs. Forms the polymerase active center together with the second largest subunit. A single-stranded DNA template strand of the promoter is positioned within the central active site cleft of Pol III. A bridging helix emanates from RPC1 and crosses the cleft near the catalytic site and is thought to promote translocation of Pol III by acting as a ratchet that moves the RNA-DNA hybrid through the active site by switching from straight to bent conformations at each step of nucleotide addition. The protein is DNA-directed RNA polymerase III subunit RPC1 of Trypanosoma brucei brucei.